Consider the following 210-residue polypeptide: HTH-type transcriptional regulator TtgR (210 aa).

The HTH tetR-type domain maps to 10-70; the sequence is QETRAQIIEA…ALLDSLHETH (61 aa). Residues 33–52 constitute a DNA-binding region (H-T-H motif); sequence TLADIAELAGVTRGAIYWHF.

Homodimer.

Its function is as follows. Represses expression from the ttgABC operon promoter and its own expression. Binds to a promoter region between the divergently transcribed ttgR and ttgABC genes/operons; in the presence of chloramphenicol or tetracycline this binding no longer occurs and ttgR and ttgABC are derepressed. This suggests that TtgR binds these antibiotics. The polypeptide is HTH-type transcriptional regulator TtgR (ttgR) (Pseudomonas putida (strain DOT-T1E)).